Consider the following 169-residue polypeptide: Nascent polypeptide-associated complex subunit alpha (169 aa).

Residues 14–78 (NKNEKKAREM…AKIDNFSQKL (65 aa)) form the NAC-A/B domain. The interval 85–128 (IQSVSKSPEEIQKDMQLAADQAGDESAKPAAAAEEDDEAPVDAG) is disordered. The region spanning 130–169 (LSAEDIELVASQANVSKNKAIKALKEHNGDIVNAIMALSK) is the UBA domain.

This sequence belongs to the NAC-alpha family. Part of the nascent polypeptide-associated complex (NAC), consisting of EGD2 and EGD1. NAC associates with ribosomes via EGD1.

Its subcellular location is the cytoplasm. It localises to the nucleus. In terms of biological role, component of the nascent polypeptide-associated complex (NAC), a dynamic component of the ribosomal exit tunnel, protecting the emerging polypeptides from interaction with other cytoplasmic proteins to ensure appropriate nascent protein targeting. The NAC complex also promotes mitochondrial protein import by enhancing productive ribosome interactions with the outer mitochondrial membrane and blocks the inappropriate interaction of ribosomes translating non-secretory nascent polypeptides with translocation sites in the membrane of the endoplasmic reticulum. EGD2 may also be involved in transcription regulation. The protein is Nascent polypeptide-associated complex subunit alpha (EGD2) of Vanderwaltozyma polyspora (strain ATCC 22028 / DSM 70294 / BCRC 21397 / CBS 2163 / NBRC 10782 / NRRL Y-8283 / UCD 57-17) (Kluyveromyces polysporus).